We begin with the raw amino-acid sequence, 354 residues long: MTTAILERLSTLSVSGQQLRRLPKILEDGLPKMPCTVPETDVPQLFREPYIRTGYRPTGHEWRYYFFSLFQKHNEVVNVWTHLLAALAVLLRFWAFAEAEALPWASTHSLPLLLFILSSITYLTCSLLAHLLQSKSELSHYTFYFVDYVGVSVYQYGSALAHFFYSSDQAWYDRFWLFFLPAAAFCGWLSCAGCCYAKYRYRRPYPVMRKICQVVPAGLAFILDISPVAHRVALCHLAGCQEQAAWYHTLQILFFLVSAYFFSCPVPEKYFPGSCDIVGHGHQIFHAFLSICTLSQLEAILLDYQGRQEIFLQRHGPLSVHMACLSFFFLAACSAATAALLRHKVKARLTKKDS.

Over 1–75 (MTTAILERLS…FFSLFQKHNE (75 aa)) the chain is Cytoplasmic. Residues 76-96 (VVNVWTHLLAALAVLLRFWAF) form a helical membrane-spanning segment. The Extracellular portion of the chain corresponds to 97-111 (AEAEALPWASTHSLP). A helical transmembrane segment spans residues 112-132 (LLLFILSSITYLTCSLLAHLL). Residues 133–174 (QSKSELSHYTFYFVDYVGVSVYQYGSALAHFFYSSDQAWYDR) lie on the Cytoplasmic side of the membrane. A helical membrane pass occupies residues 175 to 195 (FWLFFLPAAAFCGWLSCAGCC). Residues 196-213 (YAKYRYRRPYPVMRKICQ) are Extracellular-facing. A helical transmembrane segment spans residues 214–234 (VVPAGLAFILDISPVAHRVAL). Residues 235–243 (CHLAGCQEQ) lie on the Cytoplasmic side of the membrane. The chain crosses the membrane as a helical span at residues 244 to 264 (AAWYHTLQILFFLVSAYFFSC). The Extracellular portion of the chain corresponds to 265–283 (PVPEKYFPGSCDIVGHGHQ). A helical transmembrane segment spans residues 284–304 (IFHAFLSICTLSQLEAILLDY). Residues 305 to 319 (QGRQEIFLQRHGPLS) lie on the Cytoplasmic side of the membrane. Residues 320–340 (VHMACLSFFFLAACSAATAAL) form a helical membrane-spanning segment. Residues 341–354 (LRHKVKARLTKKDS) lie on the Extracellular side of the membrane.

It belongs to the ADIPOR family. As to expression, highly expressed in the hypothalamus. Also expressed in spinal cord, kidney and testis.

It is found in the cell membrane. Functionally, plasma membrane progesterone (P4) receptor coupled to G proteins. Seems to act through a G(i) mediated pathway. May be involved in oocyte maturation. Also binds dehydroepiandrosterone (DHEA), pregnanolone, pregnenolone and allopregnanolone. The chain is Membrane progestin receptor beta from Homo sapiens (Human).